Reading from the N-terminus, the 681-residue chain is DNA-directed RNA polymerase subunit beta' (681 aa).

4 residues coordinate Zn(2+): Cys69, Cys71, Cys87, and Cys90. The Mg(2+) site is built by Asp489, Asp491, and Asp493.

The protein belongs to the RNA polymerase beta' chain family. RpoC1 subfamily. In plastids the minimal PEP RNA polymerase catalytic core is composed of four subunits: alpha, beta, beta', and beta''. When a (nuclear-encoded) sigma factor is associated with the core the holoenzyme is formed, which can initiate transcription. The cofactor is Mg(2+). It depends on Zn(2+) as a cofactor.

Its subcellular location is the plastid. The protein localises to the chloroplast. It carries out the reaction RNA(n) + a ribonucleoside 5'-triphosphate = RNA(n+1) + diphosphate. Functionally, DNA-dependent RNA polymerase catalyzes the transcription of DNA into RNA using the four ribonucleoside triphosphates as substrates. The polypeptide is DNA-directed RNA polymerase subunit beta' (Anthoceros angustus (Hornwort)).